We begin with the raw amino-acid sequence, 738 residues long: Phosphoribosylformylglycinamidine synthase subunit PurL (738 aa).

Histidine 53 is an active-site residue. ATP-binding residues include tyrosine 56 and lysine 95. Residue glutamate 97 coordinates Mg(2+). Residues 98–101 and arginine 120 each bind substrate; that span reads SHNH. Residue histidine 99 is the Proton acceptor of the active site. Aspartate 121 lines the Mg(2+) pocket. Substrate is bound at residue glutamine 244. Position 274 (aspartate 274) interacts with Mg(2+). Substrate is bound at residue 318–320; it reads ESQ. The ATP site is built by aspartate 499 and glycine 536. Asparagine 537 contacts Mg(2+). Serine 539 contributes to the substrate binding site.

It belongs to the FGAMS family. In terms of assembly, monomer. Part of the FGAM synthase complex composed of 1 PurL, 1 PurQ and 2 PurS subunits.

It is found in the cytoplasm. The catalysed reaction is N(2)-formyl-N(1)-(5-phospho-beta-D-ribosyl)glycinamide + L-glutamine + ATP + H2O = 2-formamido-N(1)-(5-O-phospho-beta-D-ribosyl)acetamidine + L-glutamate + ADP + phosphate + H(+). It participates in purine metabolism; IMP biosynthesis via de novo pathway; 5-amino-1-(5-phospho-D-ribosyl)imidazole from N(2)-formyl-N(1)-(5-phospho-D-ribosyl)glycinamide: step 1/2. Its function is as follows. Part of the phosphoribosylformylglycinamidine synthase complex involved in the purines biosynthetic pathway. Catalyzes the ATP-dependent conversion of formylglycinamide ribonucleotide (FGAR) and glutamine to yield formylglycinamidine ribonucleotide (FGAM) and glutamate. The FGAM synthase complex is composed of three subunits. PurQ produces an ammonia molecule by converting glutamine to glutamate. PurL transfers the ammonia molecule to FGAR to form FGAM in an ATP-dependent manner. PurS interacts with PurQ and PurL and is thought to assist in the transfer of the ammonia molecule from PurQ to PurL. This Lacticaseibacillus paracasei (strain ATCC 334 / BCRC 17002 / CCUG 31169 / CIP 107868 / KCTC 3260 / NRRL B-441) (Lactobacillus paracasei) protein is Phosphoribosylformylglycinamidine synthase subunit PurL.